The chain runs to 164 residues: uncharacterized protein (164 aa).

The helical transmembrane segment at 46 to 66 (FIRPNIYLIIFIIIVLLLLYY) threads the bilayer. A coiled-coil region spans residues 72 to 137 (KADKEKEKLE…YNLNKENLRE (66 aa)). A compositionally biased stretch (basic and acidic residues) spans 76–91 (EKEKLEDTDKEFDKST). Residues 76–114 (EKEKLEDTDKEFDKSTNNDTNSKKIYHRQKNSKTLNSSK) form a disordered region.

It localises to the membrane. This is an uncharacterized protein from Acanthamoeba polyphaga mimivirus (APMV).